The sequence spans 534 residues: Protoheme IX farnesyltransferase (534 aa).

The tract at residues 1–251 is unknown; it reads MRREHARAIL…VLLEGKPSLL (251 aa). Transmembrane regions (helical) follow at residues 17–37, 39–59, 83–103, 128–148, 163–183, 197–217, 261–281, 284–304, 339–359, 360–380, 384–404, 411–431, 457–477, 479–499, and 508–528; these read PWLL…GGIV, ALTG…ALAI, YLTL…FGAI, LALA…ALAV, VAWA…QVLL, LMHL…TTLA, GVIS…PAGI, LSLV…SHSI, IALG…LAAI, LALA…KRTS, IVIG…AVTG, LLLW…LALI, IVIY…LGML, WAYL…ALKL, and AWAL…AMAV. A protoheme IX prenyltransferase region spans residues 252 to 530; that stretch reads KDYISLTKPG…ILFVAMAVDR (279 aa).

The protein in the C-terminal section; belongs to the UbiA prenyltransferase family. Protoheme IX farnesyltransferase subfamily.

Its subcellular location is the cell membrane. The enzyme catalyses heme b + (2E,6E)-farnesyl diphosphate + H2O = Fe(II)-heme o + diphosphate. Its pathway is porphyrin-containing compound metabolism; heme O biosynthesis; heme O from protoheme: step 1/1. Its function is as follows. Converts heme B (protoheme IX) to heme O by substitution of the vinyl group on carbon 2 of heme B porphyrin ring with a hydroxyethyl farnesyl side group. The sequence is that of Protoheme IX farnesyltransferase (ctaB) from Roseiflexus sp. (strain RS-1).